The chain runs to 210 residues: Outer-membrane lipoprotein LolB (210 aa).

A signal peptide spans 1–18 (MKKLTKLLSLTLLFALAG). A lipid anchor (N-palmitoyl cysteine) is attached at C19. C19 is lipidated: S-diacylglycerol cysteine.

It belongs to the LolB family. Monomer.

It localises to the cell outer membrane. Functionally, plays a critical role in the incorporation of lipoproteins in the outer membrane after they are released by the LolA protein. The sequence is that of Outer-membrane lipoprotein LolB from Glaesserella parasuis serovar 5 (strain SH0165) (Haemophilus parasuis).